The following is a 218-amino-acid chain: Probable nicotinate-nucleotide adenylyltransferase (218 aa).

This sequence belongs to the NadD family.

It carries out the reaction nicotinate beta-D-ribonucleotide + ATP + H(+) = deamido-NAD(+) + diphosphate. Its pathway is cofactor biosynthesis; NAD(+) biosynthesis; deamido-NAD(+) from nicotinate D-ribonucleotide: step 1/1. Functionally, catalyzes the reversible adenylation of nicotinate mononucleotide (NaMN) to nicotinic acid adenine dinucleotide (NaAD). The chain is Probable nicotinate-nucleotide adenylyltransferase from Syntrophotalea carbinolica (strain DSM 2380 / NBRC 103641 / GraBd1) (Pelobacter carbinolicus).